Here is a 755-residue protein sequence, read N- to C-terminus: Periplasmic nitrate reductase (755 aa).

Positions 1-32 form a signal peptide, tat-type signal; that stretch reads MSTSRRDFLKYFAMSAAVAAASGAGFGSLALA. A 4Fe-4S Mo/W bis-MGD-type domain is found at 38–93; it reads EKWVKGVCRYCGTGCGVLVGVKDGKAVAIQGDPNNHNAGLLCLKGSLLIPVLNSKE. [4Fe-4S] cluster-binding residues include cysteine 45, cysteine 48, cysteine 52, and cysteine 79. Residues lysine 81, glutamine 143, asparagine 168, cysteine 172, 208 to 212, 236 to 238, 255 to 257, methionine 340, glutamine 344, asparagine 450, 475 to 477, and 647 to 656 each bind Mo-bis(molybdopterin guanine dinucleotide); these read NTSEA, DPR, GTD, IEA, and SMRVIDHWHT. Residues 648–653 and phenylalanine 721 contribute to the substrate site; that span reads MRVIDH. Mo-bis(molybdopterin guanine dinucleotide) is bound by residues asparagine 729 and lysine 746.

This sequence belongs to the prokaryotic molybdopterin-containing oxidoreductase family. NasA/NapA/NarB subfamily. As to quaternary structure, monomer. Component of the periplasmic nitrate reductase NapAB complex composed of NapA and NapB. [4Fe-4S] cluster is required as a cofactor. Mo-bis(molybdopterin guanine dinucleotide) serves as cofactor. Post-translationally, predicted to be exported by the Tat system. The position of the signal peptide cleavage has been experimentally proven.

It localises to the periplasm. It catalyses the reaction 2 Fe(II)-[cytochrome] + nitrate + 2 H(+) = 2 Fe(III)-[cytochrome] + nitrite + H2O. With respect to regulation, activated by potassium and sodium ions and inhibited by magnesium and calcium ions. In terms of biological role, catalytic subunit of the periplasmic nitrate reductase complex NapAB. Receives electrons from NapB and catalyzes the reduction of nitrate to nitrite. The polypeptide is Periplasmic nitrate reductase (Desulfovibrio desulfuricans (strain ATCC 27774 / DSM 6949 / MB)).